The chain runs to 231 residues: Thiamine import ATP-binding protein ThiQ (231 aa).

The 229-residue stretch at 2-230 (LRLEDLDIRK…PPPALRGYLG (229 aa)) folds into the ABC transporter domain. 32–39 (GPSGAGKS) lines the ATP pocket.

It belongs to the ABC transporter superfamily. Thiamine importer (TC 3.A.1.19.1) family. As to quaternary structure, the complex is composed of two ATP-binding proteins (ThiQ), two transmembrane proteins (ThiP) and a solute-binding protein (ThiB).

The protein resides in the cell inner membrane. It carries out the reaction thiamine(out) + ATP + H2O = thiamine(in) + ADP + phosphate + H(+). Part of the ABC transporter complex ThiBPQ involved in thiamine import. Responsible for energy coupling to the transport system. This is Thiamine import ATP-binding protein ThiQ from Ruegeria sp. (strain TM1040) (Silicibacter sp.).